The sequence spans 228 residues: Orotidine 5'-phosphate decarboxylase (228 aa).

Substrate is bound by residues Asp10, Lys33, 60-69, Thr116, Arg178, Gln187, Gly207, and Arg208; that span reads DLKLYDIPHT. The active-site Proton donor is the Lys62.

The protein belongs to the OMP decarboxylase family. Type 1 subfamily. Homodimer.

It carries out the reaction orotidine 5'-phosphate + H(+) = UMP + CO2. It functions in the pathway pyrimidine metabolism; UMP biosynthesis via de novo pathway; UMP from orotate: step 2/2. In terms of biological role, catalyzes the decarboxylation of orotidine 5'-monophosphate (OMP) to uridine 5'-monophosphate (UMP). The protein is Orotidine 5'-phosphate decarboxylase of Oenococcus oeni (strain ATCC BAA-331 / PSU-1).